Reading from the N-terminus, the 456-residue chain is Glycerol-3-phosphate dehydrogenase [NAD(+)] At3g07690, cytosolic (456 aa).

Residues 41-46 (GAGAWG), Lys-189, and Ala-228 each bind NAD(+). A substrate-binding site is contributed by Lys-189. Lys-278 serves as the catalytic Proton acceptor. NAD(+)-binding residues include Arg-340 and Gln-368. 340-341 (RN) is a binding site for substrate.

The protein belongs to the NAD-dependent glycerol-3-phosphate dehydrogenase family. Homodimer.

The protein localises to the cytoplasm. The enzyme catalyses sn-glycerol 3-phosphate + NAD(+) = dihydroxyacetone phosphate + NADH + H(+). Required for glycerol-3-phosphate (G3P) accumulation during systemic acquired resistance (SAR) establishment. In Arabidopsis thaliana (Mouse-ear cress), this protein is Glycerol-3-phosphate dehydrogenase [NAD(+)] At3g07690, cytosolic.